The following is a 180-amino-acid chain: uncharacterized protein (180 aa).

Residues 114-147 (EDIYEDIVDVRLENQSLEEQLEDFKECSRALKKY) are a coiled coil.

Belongs to the mimivirus L74/L77/R857 family.

This is an uncharacterized protein from Acanthamoeba polyphaga mimivirus (APMV).